The sequence spans 223 residues: Acetate CoA-transferase subunit beta (223 aa).

Glutamate 46 is an active-site residue.

Belongs to the 3-oxoacid CoA-transferase subunit B family. As to quaternary structure, heterotetramer composed of two alpha subunits (AtoD) and two beta subunits (AtoA).

It catalyses the reaction an acyl-CoA + acetate = a carboxylate + acetyl-CoA. The enzyme catalyses acetoacetate + acetyl-CoA = acetoacetyl-CoA + acetate. It functions in the pathway lipid metabolism; short-chain fatty acid metabolism. In terms of biological role, coenzyme A transferase which is involved in short-chain fatty acid degradation and catalyzes the activation of short-chain fatty acids to their respective CoA thiolesters. This chain is Acetate CoA-transferase subunit beta (atoA), found in Haemophilus influenzae (strain ATCC 51907 / DSM 11121 / KW20 / Rd).